The following is a 299-amino-acid chain: Lipoyl synthase 2 (299 aa).

Positions 45, 50, 56, 71, 75, 78, and 295 each coordinate [4Fe-4S] cluster. The region spanning 57-284 is the Radical SAM core domain; the sequence is YASGTATFLL…KSFCSKLGFK (228 aa).

The protein belongs to the radical SAM superfamily. Lipoyl synthase family. The cofactor is [4Fe-4S] cluster.

It localises to the cytoplasm. It carries out the reaction [[Fe-S] cluster scaffold protein carrying a second [4Fe-4S](2+) cluster] + N(6)-octanoyl-L-lysyl-[protein] + 2 oxidized [2Fe-2S]-[ferredoxin] + 2 S-adenosyl-L-methionine + 4 H(+) = [[Fe-S] cluster scaffold protein] + N(6)-[(R)-dihydrolipoyl]-L-lysyl-[protein] + 4 Fe(3+) + 2 hydrogen sulfide + 2 5'-deoxyadenosine + 2 L-methionine + 2 reduced [2Fe-2S]-[ferredoxin]. It participates in protein modification; protein lipoylation via endogenous pathway; protein N(6)-(lipoyl)lysine from octanoyl-[acyl-carrier-protein]: step 2/2. Functionally, catalyzes the radical-mediated insertion of two sulfur atoms into the C-6 and C-8 positions of the octanoyl moiety bound to the lipoyl domains of lipoate-dependent enzymes, thereby converting the octanoylated domains into lipoylated derivatives. The protein is Lipoyl synthase 2 of Prochlorococcus marinus subsp. pastoris (strain CCMP1986 / NIES-2087 / MED4).